The following is a 283-amino-acid chain: Phosphatidylglycerol--prolipoprotein diacylglyceryl transferase (283 aa).

A run of 7 helical transmembrane segments spans residues 18–38, 59–79, 91–111, 124–144, 185–205, 213–233, and 251–271; these read LFGHPIVWYGLLFALGLIILG, LAVYVFVGTIVGARLGHVLFY, IFVTWEGGLASHGGTIGIIIA, ILWVLDRLAVPTGIVAAMIRL, TQIYEALCYLAVFALCMWLYW, YSGLIVGVFLTGIFLSRFIIE, and GLNMGQLLSIPFVLAGIWLII. Position 143 (Arg-143) interacts with a 1,2-diacyl-sn-glycero-3-phospho-(1'-sn-glycerol).

It belongs to the Lgt family.

Its subcellular location is the cell inner membrane. The catalysed reaction is L-cysteinyl-[prolipoprotein] + a 1,2-diacyl-sn-glycero-3-phospho-(1'-sn-glycerol) = an S-1,2-diacyl-sn-glyceryl-L-cysteinyl-[prolipoprotein] + sn-glycerol 1-phosphate + H(+). It functions in the pathway protein modification; lipoprotein biosynthesis (diacylglyceryl transfer). Functionally, catalyzes the transfer of the diacylglyceryl group from phosphatidylglycerol to the sulfhydryl group of the N-terminal cysteine of a prolipoprotein, the first step in the formation of mature lipoproteins. The sequence is that of Phosphatidylglycerol--prolipoprotein diacylglyceryl transferase from Porphyromonas gingivalis (strain ATCC 33277 / DSM 20709 / CIP 103683 / JCM 12257 / NCTC 11834 / 2561).